Here is a 264-residue protein sequence, read N- to C-terminus: Thymidylate synthase (264 aa).

Position 21 (R21) interacts with dUMP. H51 is a binding site for (6R)-5,10-methylene-5,6,7,8-tetrahydrofolate. 126-127 is a dUMP binding site; that stretch reads RR. C146 functions as the Nucleophile in the catalytic mechanism. Residues 166-169, N177, and 207-209 each bind dUMP; these read RSAD and HLY. D169 lines the (6R)-5,10-methylene-5,6,7,8-tetrahydrofolate pocket. A263 provides a ligand contact to (6R)-5,10-methylene-5,6,7,8-tetrahydrofolate.

This sequence belongs to the thymidylate synthase family. Bacterial-type ThyA subfamily. As to quaternary structure, homodimer.

It localises to the cytoplasm. The enzyme catalyses dUMP + (6R)-5,10-methylene-5,6,7,8-tetrahydrofolate = 7,8-dihydrofolate + dTMP. It participates in pyrimidine metabolism; dTTP biosynthesis. Its function is as follows. Catalyzes the reductive methylation of 2'-deoxyuridine-5'-monophosphate (dUMP) to 2'-deoxythymidine-5'-monophosphate (dTMP) while utilizing 5,10-methylenetetrahydrofolate (mTHF) as the methyl donor and reductant in the reaction, yielding dihydrofolate (DHF) as a by-product. This enzymatic reaction provides an intracellular de novo source of dTMP, an essential precursor for DNA biosynthesis. This Bartonella bacilliformis (strain ATCC 35685 / KC583 / Herrer 020/F12,63) protein is Thymidylate synthase.